A 372-amino-acid polypeptide reads, in one-letter code: Adaptive-response sensory kinase SasA (372 aa).

One can recognise a Histidine kinase domain in the interval 147-360 (MVAHELRTPL…CFHFTVPVWQ (214 aa)). Phosphohistidine; by autocatalysis is present on His-150.

In terms of assembly, homooligomerizes. Interacts with KaiC. Participates in the KaiBC complex, whose core is composed of a KaiC homohexamer and 6 KaiB.

The enzyme catalyses ATP + protein L-histidine = ADP + protein N-phospho-L-histidine.. In terms of biological role, member of the two-component regulatory system SasA/RpaA involved in genome-wide circadian gene expression. One of several clock output pathways. Participates in the Kai clock protein complex, the main circadian regulator in cyanobacteria, via its interaction with KaiC. KaiC enhances the autophosphorylation activity of SasA, which then transfers its phosphate group to RpaA to activate it. In addition to its output function, recruits fold-shifted KaiB (KaiB(fs)) to KaiC to cooperatively form the KaiB(6):KaiC(6) complex (independent of SasA kinase activity). Required for robustness of the circadian rhythm of gene expression and is involved in clock output, also required for adaptation to light/dark cycles. The sequence is that of Adaptive-response sensory kinase SasA from Prochlorococcus marinus (strain MIT 9215).